Reading from the N-terminus, the 126-residue chain is MTDQATPNLPSRDFDSTAAFYERLGFGIVFRDAGWMILQRGDLMLEFFAHPGLDPLASWFSCCLRLDDLAEFYRQCKSVGIQETSSGYPRIHAPELQEWGGTMAALVDPDGTLLRLIQNELLAGIS.

One can recognise a VOC domain in the interval Met1–Asn119.

Belongs to the bleomycin resistance protein family.

Functionally, binding protein with a strong affinity to the bleomycin family of antibiotics. Binds to CL990; an antimitotic-antibiotic compound. This Klebsiella pneumoniae protein is Bleomycin resistance protein (ble).